Consider the following 441-residue polypeptide: Arginine biosynthesis bifunctional protein ArgJ, mitochondrial (441 aa).

Substrate-binding residues include T178, K204, T215, E304, N436, and S441. The Nucleophile role is filled by T215.

The protein belongs to the ArgJ family. Heterodimer of an alpha and a beta chain. Post-translationally, the alpha and beta chains are autoproteolytically processed from a single precursor protein within the mitochondrion.

Its subcellular location is the mitochondrion matrix. The enzyme catalyses N(2)-acetyl-L-ornithine + L-glutamate = N-acetyl-L-glutamate + L-ornithine. It carries out the reaction L-glutamate + acetyl-CoA = N-acetyl-L-glutamate + CoA + H(+). Its pathway is amino-acid biosynthesis; L-arginine biosynthesis; L-ornithine and N-acetyl-L-glutamate from L-glutamate and N(2)-acetyl-L-ornithine (cyclic): step 1/1. It functions in the pathway amino-acid biosynthesis; L-arginine biosynthesis; N(2)-acetyl-L-ornithine from L-glutamate: step 1/4. Its function is as follows. Catalyzes two activities which are involved in the cyclic version of arginine biosynthesis: the synthesis of acetylglutamate from glutamate and acetyl-CoA, and of ornithine by transacetylation between acetylornithine and glutamate. This is Arginine biosynthesis bifunctional protein ArgJ, mitochondrial from Lodderomyces elongisporus (strain ATCC 11503 / CBS 2605 / JCM 1781 / NBRC 1676 / NRRL YB-4239) (Yeast).